A 494-amino-acid chain; its full sequence is Folate-biopterin transporter (494 aa).

Transmembrane regions (helical) follow at residues 31–51 (APSW…VLGL), 64–84 (LGLS…PWIL), 104–124 (SYLW…AAWV), 133–153 (VLLF…SLVV), 170–190 (LTWG…GALL), 197–217 (TVFA…FLIS), 246–266 (ILLP…ESAF), 284–303 (VRLV…QRFL), 310–330 (VIMG…LILI), 346–366 (LGDS…VLVL), 375–395 (IEAT…VLSF), and 415–435 (LALL…FLGL). The tract at residues 441–461 (PQVKDKTEKEDNPDDPGDRLV) is disordered.

It belongs to the major facilitator superfamily. Folate-biopterin transporter (TC 2.A.71) family.

Its subcellular location is the cell membrane. Mediates folate monoglutamate transport involved in tetrahydrofolate biosynthesis. It also mediates transport of antifolates, such as methotrexate and aminopterin. This chain is Folate-biopterin transporter, found in Synechocystis sp. (strain ATCC 27184 / PCC 6803 / Kazusa).